Here is a 566-residue protein sequence, read N- to C-terminus: Urease subunit alpha (566 aa).

In terms of domain architecture, Urease spans 128–566; it reads GGVDTHIHFI…LPMAQRYFLF (439 aa). The Ni(2+) site is built by H133, H135, and K216. N6-carboxylysine is present on K216. H218 serves as a coordination point for substrate. Ni(2+) contacts are provided by H245 and H271. H319 serves as the catalytic Proton donor. Residue D359 participates in Ni(2+) binding.

It belongs to the metallo-dependent hydrolases superfamily. Urease alpha subunit family. In terms of assembly, may form a heterohexamer of 3 UreC (alpha) and 3 UreAB (gamma/beta) subunits. May also form a heterotrimer of UreA (gamma), UreB (beta) and UreC (alpha) subunits. Three heterotrimers associate to form the active enzyme. The cofactor is Ni cation. Post-translationally, carboxylation allows a single lysine to coordinate two nickel ions.

It is found in the cytoplasm. The enzyme catalyses urea + 2 H2O + H(+) = hydrogencarbonate + 2 NH4(+). The protein operates within nitrogen metabolism; urea degradation; CO(2) and NH(3) from urea (urease route): step 1/1. This chain is Urease subunit alpha, found in Pseudomonas syringae pv. tomato (strain ATCC BAA-871 / DC3000).